Reading from the N-terminus, the 143-residue chain is Large ribosomal subunit protein uL11 (143 aa).

The protein belongs to the universal ribosomal protein uL11 family. As to quaternary structure, part of the ribosomal stalk of the 50S ribosomal subunit. Interacts with L10 and the large rRNA to form the base of the stalk. L10 forms an elongated spine to which L12 dimers bind in a sequential fashion forming a multimeric L10(L12)X complex. One or more lysine residues are methylated.

In terms of biological role, forms part of the ribosomal stalk which helps the ribosome interact with GTP-bound translation factors. The polypeptide is Large ribosomal subunit protein uL11 (Nitrosospira multiformis (strain ATCC 25196 / NCIMB 11849 / C 71)).